Reading from the N-terminus, the 257-residue chain is AT-hook motif nuclear-localized protein 16 (257 aa).

Positions 1-71 (MAGGTALTPT…SKNKPKPPII (71 aa)) are disordered. The segment at residues 53–65 (KRPRGRPAGSKNK) is a DNA-binding region (a.T hook). In terms of domain architecture, PPC spans 77–214 (PNSLRANAVE…DEAASMQNQQ (138 aa)).

In terms of assembly, interacts with FVE/MSI4 and MSI5 which are components of HDAC corepressor complexes. Preferentially expressed in the inflorescence meristem and young floral buds, as well as in seedling-stage vegetative meristems. Widely expressed in flowers, roots and stems, with relatively low expression in leaves.

It localises to the nucleus. Transcription factor that specifically binds AT-rich DNA sequences related to the nuclear matrix attachment regions (MARs). Encodes a nuclear matrix protein that acts in the maintenance of genomic integrity by silencing TEs and repeat-containing genes through epigenetic machinery. Acts as a chromatin remodeling factor that modifies the architecture of FLC and FWA chromatin by modulating both H3 acetylation and methylation leading to the regulation of FLC and FWA expression. Negatively regulates floral repressors including MAF4 and MAF5. Plays a transcription activation role in anther development. Regulates the expression of arabinogalactan proteins (AGPs) involved in the formation of the nexine layer of the pollen wall. Binds AGP6, AGP11, AGP23 and AGP40 promoters. The polypeptide is AT-hook motif nuclear-localized protein 16 (Arabidopsis thaliana (Mouse-ear cress)).